The following is a 226-amino-acid chain: Phosphoribosylformylglycinamidine synthase subunit PurQ (226 aa).

The Glutamine amidotransferase type-1 domain occupies 2-226 (KFAVIQFPGS…LKNFLVTVKN (225 aa)). The active-site Nucleophile is Cys-86. Active-site residues include His-195 and Glu-197.

Part of the FGAM synthase complex composed of 1 PurL, 1 PurQ and 2 PurS subunits.

The protein resides in the cytoplasm. The enzyme catalyses N(2)-formyl-N(1)-(5-phospho-beta-D-ribosyl)glycinamide + L-glutamine + ATP + H2O = 2-formamido-N(1)-(5-O-phospho-beta-D-ribosyl)acetamidine + L-glutamate + ADP + phosphate + H(+). The catalysed reaction is L-glutamine + H2O = L-glutamate + NH4(+). Its pathway is purine metabolism; IMP biosynthesis via de novo pathway; 5-amino-1-(5-phospho-D-ribosyl)imidazole from N(2)-formyl-N(1)-(5-phospho-D-ribosyl)glycinamide: step 1/2. Functionally, part of the phosphoribosylformylglycinamidine synthase complex involved in the purines biosynthetic pathway. Catalyzes the ATP-dependent conversion of formylglycinamide ribonucleotide (FGAR) and glutamine to yield formylglycinamidine ribonucleotide (FGAM) and glutamate. The FGAM synthase complex is composed of three subunits. PurQ produces an ammonia molecule by converting glutamine to glutamate. PurL transfers the ammonia molecule to FGAR to form FGAM in an ATP-dependent manner. PurS interacts with PurQ and PurL and is thought to assist in the transfer of the ammonia molecule from PurQ to PurL. The polypeptide is Phosphoribosylformylglycinamidine synthase subunit PurQ (Lactococcus lactis subsp. cremoris (Streptococcus cremoris)).